The following is a 1585-amino-acid chain: Sterol 3-beta-glucosyltransferase (1585 aa).

Residues Met1 to Pro18 are compositionally biased toward pro residues. Disordered stretches follow at residues Met1–Phe151, Pro177–Thr225, and Tyr249–Gly279. Composition is skewed to polar residues over residues Asp65 to Thr92, Asp105 to Glu123, and Pro132 to Glu148. Residues Trp178–Ile194 are compositionally biased toward acidic residues. Residues Glu255–Glu273 show a composition bias toward low complexity. The region spanning Glu387–Pro555 is the GRAM 1 domain. The 93-residue stretch at Leu438–Phe530 folds into the PH domain. Disordered regions lie at residues Thr625–Ala645 and Asp666–Ser852. Residues Leu670–His689 are compositionally biased toward basic and acidic residues. Polar residues-rich tracts occupy residues Thr760–Val785, Asn806–Glu817, and Ser827–Lys840. The region spanning Arg862 to Lys933 is the GRAM 2 domain. Positions 1043, 1044, 1046, 1358, 1360, 1373, 1377, 1378, 1397, and 1398 each coordinate UDP-alpha-D-glucose. The interval Asn1499 to Pro1552 is disordered. Positions Ser1529–Val1545 are enriched in low complexity.

This sequence belongs to the glycosyltransferase 28 family.

Its subcellular location is the cytoplasm. The protein localises to the membrane. The enzyme catalyses a sterol + UDP-alpha-D-glucose = a sterol 3-beta-D-glucoside + UDP + H(+). It carries out the reaction ergosterol + UDP-alpha-D-glucose = ergosteryl 3-beta-D-glucoside + UDP + H(+). Sterol glycosyltransferase responsible for the glycosylation of ergosterol to form ergosterol-glucoside. The chain is Sterol 3-beta-glucosyltransferase from Cryptococcus neoformans var. neoformans serotype D (strain B-3501A) (Filobasidiella neoformans).